A 152-amino-acid polypeptide reads, in one-letter code: uncharacterized protein (152 aa).

This is an uncharacterized protein from Acheta domesticus (House cricket).